A 451-amino-acid polypeptide reads, in one-letter code: D(1A) dopamine receptor (451 aa).

Topologically, residues Met-1–Arg-22 are extracellular. Residue Asn-4 is glycosylated (N-linked (GlcNAc...) asparagine). The chain crosses the membrane as a helical span at residues Val-23–Ile-48. Residues Arg-49–Asn-59 are Cytoplasmic-facing. Residues Phe-60–Ala-86 traverse the membrane as a helical segment. The Extracellular segment spans residues Gly-87–Cys-95. A disulfide bridge connects residues Cys-95 and Cys-185. A helical transmembrane segment spans residues Asn-96–Val-118. The Cytoplasmic segment spans residues Asp-119–Lys-137. The helical transmembrane segment at Val-138 to Trp-162 threads the bilayer. Residues His-163 to Arg-191 are Extracellular-facing. Residues Thr-192–Tyr-217 form a helical membrane-spanning segment. The Cytoplasmic portion of the chain corresponds to Arg-218–Lys-271. The helical transmembrane segment at Thr-272 to Asp-298 threads the bilayer. Topologically, residues Pro-299 to Thr-315 are extracellular. A helical membrane pass occupies residues Phe-316 to Phe-340. The Cytoplasmic portion of the chain corresponds to Arg-341–Thr-451. Cys-350 carries the S-palmitoyl cysteine lipid modification.

Belongs to the G-protein coupled receptor 1 family. As to expression, brain.

Its subcellular location is the cell membrane. The protein localises to the cell projection. It localises to the cilium membrane. In terms of biological role, dopamine receptor whose activity is mediated by G proteins which activate adenylyl cyclase. This is D(1A) dopamine receptor (drd1) from Xenopus laevis (African clawed frog).